Reading from the N-terminus, the 139-residue chain is Holo-[acyl-carrier-protein] synthase (139 aa).

Positions 8 and 57 each coordinate Mg(2+).

Belongs to the P-Pant transferase superfamily. AcpS family. Requires Mg(2+) as cofactor.

It localises to the cytoplasm. The enzyme catalyses apo-[ACP] + CoA = holo-[ACP] + adenosine 3',5'-bisphosphate + H(+). Transfers the 4'-phosphopantetheine moiety from coenzyme A to a Ser of acyl-carrier-protein. The sequence is that of Holo-[acyl-carrier-protein] synthase from Sinorhizobium medicae (strain WSM419) (Ensifer medicae).